We begin with the raw amino-acid sequence, 166 residues long: NADH-quinone oxidoreductase subunit E (166 aa).

Positions 92, 97, 133, and 137 each coordinate [2Fe-2S] cluster.

The protein belongs to the complex I 24 kDa subunit family. As to quaternary structure, composed of 13 different subunits. Subunits NuoCD, E, F, and G constitute the peripheral sector of the complex. The cofactor is [2Fe-2S] cluster.

The enzyme catalyses a quinone + NADH + 5 H(+)(in) = a quinol + NAD(+) + 4 H(+)(out). In terms of biological role, NDH-1 shuttles electrons from NADH, via FMN and iron-sulfur (Fe-S) centers, to quinones in the respiratory chain. The immediate electron acceptor for the enzyme in this species is believed to be ubiquinone. Couples the redox reaction to proton translocation (for every two electrons transferred, four hydrogen ions are translocated across the cytoplasmic membrane), and thus conserves the redox energy in a proton gradient. The polypeptide is NADH-quinone oxidoreductase subunit E (nuoE) (Shigella flexneri).